A 461-amino-acid chain; its full sequence is ATP synthase subunit beta (461 aa).

151–158 provides a ligand contact to ATP; the sequence is GGAGVGKT.

This sequence belongs to the ATPase alpha/beta chains family. As to quaternary structure, F-type ATPases have 2 components, CF(1) - the catalytic core - and CF(0) - the membrane proton channel. CF(1) has five subunits: alpha(3), beta(3), gamma(1), delta(1), epsilon(1). CF(0) has three main subunits: a(1), b(2) and c(9-12). The alpha and beta chains form an alternating ring which encloses part of the gamma chain. CF(1) is attached to CF(0) by a central stalk formed by the gamma and epsilon chains, while a peripheral stalk is formed by the delta and b chains.

The protein localises to the cell inner membrane. It carries out the reaction ATP + H2O + 4 H(+)(in) = ADP + phosphate + 5 H(+)(out). Its function is as follows. Produces ATP from ADP in the presence of a proton gradient across the membrane. The catalytic sites are hosted primarily by the beta subunits. This Coxiella burnetii (strain Dugway 5J108-111) protein is ATP synthase subunit beta.